We begin with the raw amino-acid sequence, 940 residues long: Phosphoenolpyruvate carboxylase (940 aa).

Residues histidine 138 and lysine 603 contribute to the active site.

This sequence belongs to the PEPCase type 1 family. The cofactor is Mg(2+).

It catalyses the reaction oxaloacetate + phosphate = phosphoenolpyruvate + hydrogencarbonate. Forms oxaloacetate, a four-carbon dicarboxylic acid source for the tricarboxylic acid cycle. This is Phosphoenolpyruvate carboxylase from Streptococcus thermophilus (strain ATCC BAA-491 / LMD-9).